We begin with the raw amino-acid sequence, 662 residues long: LIM domain kinase 1 (662 aa).

LIM zinc-binding domains are found at residues 24–83 (PVCA…RFGE) and 84–145 (LCHG…MVVT). The PDZ domain maps to 166–259 (LVSIPACSDG…LLQLTIEHDP (94 aa)). The tract at residues 262–328 (PLPRDLALPC…ASQRKDIGRS (67 aa)) is disordered. The segment covering 272 to 287 (SPLPDPHSPLRSPVPA) has biased composition (pro residues). Positions 309–320 (SPGSSSVGSPAS) are enriched in low complexity. The Protein kinase domain occupies 346–611 (LIHGEVLGKG…PSFSKLEQWL (266 aa)). ATP contacts are provided by residues 352–360 (LGKGCFGQA) and K375. The active site involves D467.

It belongs to the protein kinase superfamily. TKL Ser/Thr protein kinase family. In terms of tissue distribution, expressed predominantly in the brain.

The protein resides in the cytoplasm. The protein localises to the nucleus. It is found in the cytoskeleton. It localises to the cell projection. Its subcellular location is the growth cone. It catalyses the reaction L-seryl-[protein] + ATP = O-phospho-L-seryl-[protein] + ADP + H(+). It carries out the reaction L-threonyl-[protein] + ATP = O-phospho-L-threonyl-[protein] + ADP + H(+). Its function is as follows. Protein kinase which regulates actin filament dynamics. Phosphorylates and inactivates the actin binding/depolymerizing factor cofilin, thereby stabilizing the actin cytoskeleton. Required for motility of the axon growth cone. This chain is LIM domain kinase 1 (LIMK1), found in Gallus gallus (Chicken).